The primary structure comprises 247 residues: Spermatogenesis-associated protein 46 (247 aa).

A disordered region spans residues Gln125–Thr164. Residues Ser137–Asn147 show a composition bias toward polar residues.

The protein resides in the nucleus membrane. Its function is as follows. Plays a role in spermiogenesis and fertilization. The polypeptide is Spermatogenesis-associated protein 46 (SPATA46) (Bos taurus (Bovine)).